A 261-amino-acid polypeptide reads, in one-letter code: Cytochrome c oxidase subunit 3 (261 aa).

Residues 1-15 (MTHQSHAYHMVKPSP) are Mitochondrial matrix-facing. A helical membrane pass occupies residues 16–34 (WPLTGALSALLMTSGLAMW). Residues 35 to 40 (FHFYST) lie on the Mitochondrial intermembrane side of the membrane. Residues 41-66 (TLLTLGLLTNTLTMYQWWRDVMREGT) traverse the membrane as a helical segment. Over 67–72 (YQGHHT) the chain is Mitochondrial matrix. The helical transmembrane segment at 73-105 (PPVQKGLRYGMILFITSEVFFFAGFFWAFYHSS) threads the bilayer. Residues 106 to 128 (LAPTPQLGGHWPPTGITPLNPLE) lie on the Mitochondrial intermembrane side of the membrane. A helical membrane pass occupies residues 129–152 (VPLLNTSVLLASGVSITWAHHSLM). The Mitochondrial matrix segment spans residues 153–155 (ENN). The chain crosses the membrane as a helical span at residues 156–183 (RNQMIQALLITILLGLYFTLLQASEYFE). Residues 184–190 (SPFTISD) are Mitochondrial intermembrane-facing. Residues 191-223 (GIYGSTFFVATGFHGLHVIIGSTFLTICLIRQL) traverse the membrane as a helical segment. Over 224–232 (MFHFTSKHH) the chain is Mitochondrial matrix. Residues 233–256 (FGFQAAAWYWHFVDVVWLFLYVSI) traverse the membrane as a helical segment. At 257–261 (YWWGS) the chain is on the mitochondrial intermembrane side.

It belongs to the cytochrome c oxidase subunit 3 family. In terms of assembly, component of the cytochrome c oxidase (complex IV, CIV), a multisubunit enzyme composed of 14 subunits. The complex is composed of a catalytic core of 3 subunits MT-CO1, MT-CO2 and MT-CO3, encoded in the mitochondrial DNA, and 11 supernumerary subunits COX4I, COX5A, COX5B, COX6A, COX6B, COX6C, COX7A, COX7B, COX7C, COX8 and NDUFA4, which are encoded in the nuclear genome. The complex exists as a monomer or a dimer and forms supercomplexes (SCs) in the inner mitochondrial membrane with NADH-ubiquinone oxidoreductase (complex I, CI) and ubiquinol-cytochrome c oxidoreductase (cytochrome b-c1 complex, complex III, CIII), resulting in different assemblies (supercomplex SCI(1)III(2)IV(1) and megacomplex MCI(2)III(2)IV(2)).

It localises to the mitochondrion inner membrane. It carries out the reaction 4 Fe(II)-[cytochrome c] + O2 + 8 H(+)(in) = 4 Fe(III)-[cytochrome c] + 2 H2O + 4 H(+)(out). In terms of biological role, component of the cytochrome c oxidase, the last enzyme in the mitochondrial electron transport chain which drives oxidative phosphorylation. The respiratory chain contains 3 multisubunit complexes succinate dehydrogenase (complex II, CII), ubiquinol-cytochrome c oxidoreductase (cytochrome b-c1 complex, complex III, CIII) and cytochrome c oxidase (complex IV, CIV), that cooperate to transfer electrons derived from NADH and succinate to molecular oxygen, creating an electrochemical gradient over the inner membrane that drives transmembrane transport and the ATP synthase. Cytochrome c oxidase is the component of the respiratory chain that catalyzes the reduction of oxygen to water. Electrons originating from reduced cytochrome c in the intermembrane space (IMS) are transferred via the dinuclear copper A center (CU(A)) of subunit 2 and heme A of subunit 1 to the active site in subunit 1, a binuclear center (BNC) formed by heme A3 and copper B (CU(B)). The BNC reduces molecular oxygen to 2 water molecules using 4 electrons from cytochrome c in the IMS and 4 protons from the mitochondrial matrix. The polypeptide is Cytochrome c oxidase subunit 3 (MT-CO3) (Pan troglodytes (Chimpanzee)).